A 201-amino-acid chain; its full sequence is MEITTIDTKSKLKLNKEIFAYTYNEGLVHQAVVTFMNNARSGNSAQKTRSEVSGGGKKPWNQKGTGRARAGTIRSPLWRSGGVTFASKKRDYSQKLNKKMYKRALRSIISELCRTGNLVVVSDFQCDNHKTKDFLKKMNQMEISSALIIMSEVGENEYLGSRNLIDYDICDVTTIDPVSLLRFEKVVVTEAAIKKIEEQLQ.

Positions 42-67 (GNSAQKTRSEVSGGGKKPWNQKGTGR) are disordered.

Belongs to the universal ribosomal protein uL4 family. As to quaternary structure, part of the 50S ribosomal subunit.

In terms of biological role, one of the primary rRNA binding proteins, this protein initially binds near the 5'-end of the 23S rRNA. It is important during the early stages of 50S assembly. It makes multiple contacts with different domains of the 23S rRNA in the assembled 50S subunit and ribosome. Forms part of the polypeptide exit tunnel. This Legionella pneumophila (strain Lens) protein is Large ribosomal subunit protein uL4.